The following is a 357-amino-acid chain: Peptide chain release factor 1 (357 aa).

Q234 is subject to N5-methylglutamine.

Belongs to the prokaryotic/mitochondrial release factor family. Methylated by PrmC. Methylation increases the termination efficiency of RF1.

The protein localises to the cytoplasm. Its function is as follows. Peptide chain release factor 1 directs the termination of translation in response to the peptide chain termination codons UAG and UAA. This Alkaliphilus oremlandii (strain OhILAs) (Clostridium oremlandii (strain OhILAs)) protein is Peptide chain release factor 1.